Here is a 383-residue protein sequence, read N- to C-terminus: Peroxisomal membrane protein PEX15 (383 aa).

Residues 1 to 331 (MAASEIMNNL…AVLKHHFTRS (331 aa)) lie on the Cytoplasmic side of the membrane. A helical transmembrane segment spans residues 332–349 (VLNKNGLLLTGLLLLLCL). Residues 350–383 (KKYKSLMAIFKHVPAAFHTVYPQIVGLLKLLASI) lie on the Lumenal side of the membrane.

Interacts with PEX6. Interacts with PEX19; targets PEX15 to the peroxisome. Phosphorylated.

It is found in the peroxisome membrane. The protein localises to the endoplasmic reticulum membrane. Peroxisomal docking factor that anchors PEX1 and PEX6 to peroxisome membranes. PEX26 is therefore required for the formation of the PEX1-PEX6 AAA ATPase complex, a complex that mediates the extraction of the PEX5 receptor from peroxisomal membrane. The protein is Peroxisomal membrane protein PEX15 (PEX15) of Saccharomyces cerevisiae (strain ATCC 204508 / S288c) (Baker's yeast).